Reading from the N-terminus, the 365-residue chain is Red-sensitive opsin (365 aa).

The Extracellular portion of the chain corresponds to methionine 1–valine 51. Residue asparagine 33 is glycosylated (N-linked (GlcNAc...) asparagine). The helical transmembrane segment at tyrosine 52–alanine 76 threads the bilayer. The Cytoplasmic portion of the chain corresponds to threonine 77 to asparagine 88. The helical transmembrane segment at tryptophan 89 to glutamine 113 threads the bilayer. The Extracellular segment spans residues isoleucine 114–glutamate 128. Residues cysteine 125 and cysteine 202 are joined by a disulfide bond. Residues glycine 129–tryptophan 148 traverse the membrane as a helical segment. Residues glutamate 149–leucine 167 are Cytoplasmic-facing. Residues alanine 168–serine 191 traverse the membrane as a helical segment. The Extracellular portion of the chain corresponds to arginine 192–serine 217. A helical transmembrane segment spans residues tyrosine 218–isoleucine 245. Over arginine 246–arginine 267 the chain is Cytoplasmic. Residues methionine 268 to alanine 291 form a helical membrane-spanning segment. Over phenylalanine 292–histidine 299 the chain is Extracellular. Residues proline 300–methionine 324 form a helical membrane-spanning segment. Lysine 311 is subject to N6-(retinylidene)lysine. The Cytoplasmic segment spans residues asparagine 325–alanine 365. The segment at aspartate 342 to alanine 365 is disordered. Low complexity predominate over residues glutamate 345–alanine 365.

It belongs to the G-protein coupled receptor 1 family. Opsin subfamily. Post-translationally, phosphorylated on some or all of the serine and threonine residues present in the C-terminal region.

Its subcellular location is the membrane. Its function is as follows. Visual pigments are the light-absorbing molecules that mediate vision. They consist of an apoprotein, opsin, covalently linked to cis-retinal. This Xenopus laevis (African clawed frog) protein is Red-sensitive opsin (opn1lw1).